We begin with the raw amino-acid sequence, 263 residues long: Endonuclease 8 (263 aa).

The Schiff-base intermediate with DNA role is filled by proline 2. Catalysis depends on glutamate 3, which acts as the Proton donor. Lysine 53 functions as the Proton donor; for beta-elimination activity in the catalytic mechanism. DNA contacts are provided by glutamine 70, arginine 125, and asparagine 169. The FPG-type zinc finger occupies 229–263 (KVFHRDGEPCERCGSIIEKTTLSSRPFYWCPGCQH). Catalysis depends on arginine 253, which acts as the Proton donor; for delta-elimination activity.

Belongs to the FPG family. Zn(2+) is required as a cofactor.

It catalyses the reaction 2'-deoxyribonucleotide-(2'-deoxyribose 5'-phosphate)-2'-deoxyribonucleotide-DNA = a 3'-end 2'-deoxyribonucleotide-(2,3-dehydro-2,3-deoxyribose 5'-phosphate)-DNA + a 5'-end 5'-phospho-2'-deoxyribonucleoside-DNA + H(+). Functionally, involved in base excision repair of DNA damaged by oxidation or by mutagenic agents. Acts as a DNA glycosylase that recognizes and removes damaged bases. Has a preference for oxidized pyrimidines, such as thymine glycol, 5,6-dihydrouracil and 5,6-dihydrothymine. Has AP (apurinic/apyrimidinic) lyase activity and introduces nicks in the DNA strand. Cleaves the DNA backbone by beta-delta elimination to generate a single-strand break at the site of the removed base with both 3'- and 5'-phosphates. The polypeptide is Endonuclease 8 (Escherichia coli O9:H4 (strain HS)).